The sequence spans 44 residues: Small ribosomal subunit protein eS7 (44 aa).

Residues 18–34 (KPTRKSRIKNKQKRPRS) are compositionally biased toward basic residues. The tract at residues 18–44 (KPTRKSRIKNKQKRPRSRTLTAVHDAI) is disordered.

The protein belongs to the eukaryotic ribosomal protein eS7 family. As to quaternary structure, component of the small ribosomal subunit.

It localises to the cytoplasm. The protein resides in the cytoskeleton. It is found in the microtubule organizing center. Its subcellular location is the centrosome. The protein localises to the nucleus. Functionally, component of the small ribosomal subunit. The ribosome is a large ribonucleoprotein complex responsible for the synthesis of proteins in the cell. Required for rRNA maturation. The chain is Small ribosomal subunit protein eS7 (rps7) from Salmo salar (Atlantic salmon).